Here is a 411-residue protein sequence, read N- to C-terminus: D-ribitol-5-phosphate cytidylyltransferase (411 aa).

This sequence belongs to the IspD/TarI cytidylyltransferase family. IspD subfamily. Homodimer.

It is found in the cytoplasm. It localises to the cytosol. The catalysed reaction is D-ribitol 5-phosphate + CTP + H(+) = CDP-L-ribitol + diphosphate. It carries out the reaction D-ribose 5-phosphate + CTP + H(+) = CDP-D-ribose + diphosphate. It catalyses the reaction D-ribulose 5-phosphate + CTP + H(+) = CDP-D-ribulose + diphosphate. It participates in protein modification; protein glycosylation. Its function is as follows. Cytidylyltransferase required for protein O-linked mannosylation. Catalyzes the formation of CDP-ribitol nucleotide sugar from D-ribitol 5-phosphate. CDP-ribitol is a substrate of FKTN during the biosynthesis of the phosphorylated O-mannosyl trisaccharide (N-acetylgalactosamine-beta-3-N-acetylglucosamine-beta-4-(phosphate-6-)mannose), a carbohydrate structure present in alpha-dystroglycan (DAG1), which is required for binding laminin G-like domain-containing extracellular proteins with high affinity. Shows activity toward other pentose phosphate sugars and mediates formation of CDP-ribulose or CDP-ribose using CTP and ribulose-5-phosphate or ribose-5-phosphate, respectively. Not involved in dolichol production. The polypeptide is D-ribitol-5-phosphate cytidylyltransferase (crppa) (Xenopus tropicalis (Western clawed frog)).